The following is a 91-amino-acid chain: Lipolysis-activating peptide 1-alpha chain (91 aa).

Positions Met1 to Ser21 are cleaved as a signal peptide. In terms of domain architecture, LCN-type CS-alpha/beta spans Asp23 to Lys87. Disulfide bonds link Cys38–Cys61, Cys47–Cys66, and Cys51–Cys68.

It belongs to the long (3 C-C) scorpion toxin superfamily. Heterodimer of this alpha chain and a beta chain (AC D9U2A2). Expressed by the venom gland.

The protein localises to the secreted. Functionally, the heterodimer LVP1 induces lipolysis in rat adipocytes. Induction of lipolysis by LVP1 appears to be mediated through the beta-2 adrenergic receptor pathway (ADRB2). The sequence is that of Lipolysis-activating peptide 1-alpha chain from Lychas mucronatus (Chinese swimming scorpion).